The following is a 547-amino-acid chain: Serine/threonine-protein kinase pkn3 (547 aa).

Positions 18–288 (YRVEALIGEG…EAFKAELQAV (271 aa)) constitute a Protein kinase domain. Residues 24-32 (IGEGGMGKV) and lysine 47 each bind ATP. Aspartate 142 (proton acceptor) is an active-site residue. Residues 290-299 (KERRRMDSAP) show a composition bias toward basic and acidic residues. Residues 290-327 (KERRRMDSAPRRSANSSAVLAPLPRKSAASPQSDVRDA) are disordered.

The protein belongs to the protein kinase superfamily. Ser/Thr protein kinase family.

It carries out the reaction L-seryl-[protein] + ATP = O-phospho-L-seryl-[protein] + ADP + H(+). The enzyme catalyses L-threonyl-[protein] + ATP = O-phospho-L-threonyl-[protein] + ADP + H(+). The polypeptide is Serine/threonine-protein kinase pkn3 (pkn3) (Myxococcus xanthus).